We begin with the raw amino-acid sequence, 549 residues long: Longitudinals lacking protein, isoforms H/M/V (549 aa).

The BTB domain occupies 32 to 97 (VDCTLAAEGK…MYRGEVNISQ (66 aa)). Disordered stretches follow at residues 115-200 (LSDN…SSVL) and 228-340 (SSGP…ASAS). Low complexity-rich tracts occupy residues 162–175 (SGDV…SSSP), 228–251 (SSGP…LTST), 263–293 (TSST…QTTS), and 329–340 (NSATGPNPASAS).

As to expression, mostly neuronal.

It localises to the nucleus. In terms of biological role, putative transcription factor required for axon growth and guidance in the central and peripheral nervous systems. Repels CNS axons away from the midline by promoting the expression of the midline repellent sli and its receptor robo. This chain is Longitudinals lacking protein, isoforms H/M/V, found in Drosophila melanogaster (Fruit fly).